A 162-amino-acid polypeptide reads, in one-letter code: MLRQLRLTMDILGWIFLPWRRSISNIKDSPPPPPLASTFDDVIVDYEDPDYLPLPEYPVRPNEPLETRKQRLLYQSRKRGMLENDLLLSTFAAKHLQNFSAEQTAQYDQLINGVSNDWDIYYWATDVKPTPKEYDTEIMRLLKKHVKNAEGVTRLRQPDLNT.

Belongs to the SDHAF2 family. As to quaternary structure, interacts with the flavoprotein subunit within the SDH catalytic dimer.

It is found in the mitochondrion matrix. Plays an essential role in the assembly of succinate dehydrogenase (SDH), an enzyme complex (also referred to as respiratory complex II) that is a component of both the tricarboxylic acid (TCA) cycle and the mitochondrial electron transport chain, and which couples the oxidation of succinate to fumarate with the reduction of ubiquinone (coenzyme Q) to ubiquinol. Required for flavinylation (covalent attachment of FAD) of the flavoprotein subunit of the SDH catalytic dimer. The polypeptide is Succinate dehydrogenase assembly factor 2-A, mitochondrial (Drosophila yakuba (Fruit fly)).